Consider the following 478-residue polypeptide: Pyruvate kinase (478 aa).

R35 contributes to the substrate binding site. Residues N37, S39, and D69 each coordinate K(+). ATP is bound at residue 37-40 (NMSH). ATP-binding residues include R76 and K157. Residue E219 participates in Mg(2+) binding. Residues G242, D243, and T275 each contribute to the substrate site. A Mg(2+)-binding site is contributed by D243.

This sequence belongs to the pyruvate kinase family. Homotetramer. Requires Mg(2+) as cofactor. The cofactor is K(+).

The catalysed reaction is pyruvate + ATP = phosphoenolpyruvate + ADP + H(+). Its pathway is carbohydrate degradation; glycolysis; pyruvate from D-glyceraldehyde 3-phosphate: step 5/5. This chain is Pyruvate kinase (pyk), found in Methylorubrum extorquens (strain ATCC 14718 / DSM 1338 / JCM 2805 / NCIMB 9133 / AM1) (Methylobacterium extorquens).